A 348-amino-acid polypeptide reads, in one-letter code: Selenide, water dikinase (348 aa).

C17 is a catalytic residue. ATP contacts are provided by residues K20 and 48 to 50; that span reads TSD. Mg(2+) is bound at residue D51. Residues D68, D91, and 139 to 141 contribute to the ATP site; that span reads GHT. D91 contacts Mg(2+). D227 contributes to the Mg(2+) binding site.

It belongs to the selenophosphate synthase 1 family. Class I subfamily. In terms of assembly, homodimer. Requires Mg(2+) as cofactor.

The enzyme catalyses hydrogenselenide + ATP + H2O = selenophosphate + AMP + phosphate + 2 H(+). Synthesizes selenophosphate from selenide and ATP. In Dechloromonas aromatica (strain RCB), this protein is Selenide, water dikinase.